A 490-amino-acid polypeptide reads, in one-letter code: Aspartyl/glutamyl-tRNA(Asn/Gln) amidotransferase subunit B (490 aa).

The protein belongs to the GatB/GatE family. GatB subfamily. Heterotrimer of A, B and C subunits.

The enzyme catalyses L-glutamyl-tRNA(Gln) + L-glutamine + ATP + H2O = L-glutaminyl-tRNA(Gln) + L-glutamate + ADP + phosphate + H(+). It carries out the reaction L-aspartyl-tRNA(Asn) + L-glutamine + ATP + H2O = L-asparaginyl-tRNA(Asn) + L-glutamate + ADP + phosphate + 2 H(+). Functionally, allows the formation of correctly charged Asn-tRNA(Asn) or Gln-tRNA(Gln) through the transamidation of misacylated Asp-tRNA(Asn) or Glu-tRNA(Gln) in organisms which lack either or both of asparaginyl-tRNA or glutaminyl-tRNA synthetases. The reaction takes place in the presence of glutamine and ATP through an activated phospho-Asp-tRNA(Asn) or phospho-Glu-tRNA(Gln). This Synechococcus sp. (strain JA-2-3B'a(2-13)) (Cyanobacteria bacterium Yellowstone B-Prime) protein is Aspartyl/glutamyl-tRNA(Asn/Gln) amidotransferase subunit B.